Consider the following 276-residue polypeptide: Small ribosomal subunit protein uS2 (276 aa).

The disordered stretch occupies residues 251 to 276; that stretch reads AEEAPAAAEEAPAAEPAAEETPAAEA. Low complexity predominate over residues 252–276; sequence EEAPAAAEEAPAAEPAAEETPAAEA.

This sequence belongs to the universal ribosomal protein uS2 family.

This Jannaschia sp. (strain CCS1) protein is Small ribosomal subunit protein uS2.